The primary structure comprises 446 residues: N-succinylarginine dihydrolase (446 aa).

Substrate-binding positions include 19-28 (AGLSFGNVAS), Asn110, and 137-138 (HR). Glu174 is a catalytic residue. Residue Arg213 coordinates substrate. Residue His249 is part of the active site. Residues Asp251 and Asn364 each coordinate substrate. Cys370 acts as the Nucleophile in catalysis.

Belongs to the succinylarginine dihydrolase family. In terms of assembly, homodimer.

The catalysed reaction is N(2)-succinyl-L-arginine + 2 H2O + 2 H(+) = N(2)-succinyl-L-ornithine + 2 NH4(+) + CO2. It participates in amino-acid degradation; L-arginine degradation via AST pathway; L-glutamate and succinate from L-arginine: step 2/5. Functionally, catalyzes the hydrolysis of N(2)-succinylarginine into N(2)-succinylornithine, ammonia and CO(2). This chain is N-succinylarginine dihydrolase, found in Burkholderia thailandensis (strain ATCC 700388 / DSM 13276 / CCUG 48851 / CIP 106301 / E264).